The sequence spans 302 residues: Methionyl-tRNA formyltransferase (302 aa).

109–112 (SILP) contacts (6S)-5,6,7,8-tetrahydrofolate.

The protein belongs to the Fmt family.

The catalysed reaction is L-methionyl-tRNA(fMet) + (6R)-10-formyltetrahydrofolate = N-formyl-L-methionyl-tRNA(fMet) + (6S)-5,6,7,8-tetrahydrofolate + H(+). In terms of biological role, attaches a formyl group to the free amino group of methionyl-tRNA(fMet). The formyl group appears to play a dual role in the initiator identity of N-formylmethionyl-tRNA by promoting its recognition by IF2 and preventing the misappropriation of this tRNA by the elongation apparatus. In Campylobacter hominis (strain ATCC BAA-381 / DSM 21671 / CCUG 45161 / LMG 19568 / NCTC 13146 / CH001A), this protein is Methionyl-tRNA formyltransferase.